We begin with the raw amino-acid sequence, 309 residues long: Porphobilinogen deaminase (309 aa).

Residue C242 is modified to S-(dipyrrolylmethanemethyl)cysteine.

This sequence belongs to the HMBS family. As to quaternary structure, monomer. The cofactor is dipyrromethane.

It carries out the reaction 4 porphobilinogen + H2O = hydroxymethylbilane + 4 NH4(+). It participates in porphyrin-containing compound metabolism; protoporphyrin-IX biosynthesis; coproporphyrinogen-III from 5-aminolevulinate: step 2/4. Functionally, tetrapolymerization of the monopyrrole PBG into the hydroxymethylbilane pre-uroporphyrinogen in several discrete steps. The polypeptide is Porphobilinogen deaminase (Legionella pneumophila (strain Paris)).